The chain runs to 161 residues: Cytochrome c-type biogenesis protein CcmE (161 aa).

The Cytoplasmic segment spans residues 1 to 8; that stretch reads MNPRRKKR. A helical; Signal-anchor for type II membrane protein membrane pass occupies residues 9 to 29; that stretch reads LTLAVALVFGLGATIGLMLYA. At 30-161 the chain is on the periplasmic side; that stretch reads LSQNMDLFYT…SDEQKQGRVQ (132 aa). Positions 129 and 133 each coordinate heme.

This sequence belongs to the CcmE/CycJ family.

It is found in the cell inner membrane. Heme chaperone required for the biogenesis of c-type cytochromes. Transiently binds heme delivered by CcmC and transfers the heme to apo-cytochromes in a process facilitated by CcmF and CcmH. This chain is Cytochrome c-type biogenesis protein CcmE, found in Photobacterium profundum (strain SS9).